The primary structure comprises 118 residues: Mitochondrial protein YPR099C (118 aa).

The protein resides in the mitochondrion. Functionally, essential for the functional mitochondria and respiratory growth. The protein is Mitochondrial protein YPR099C of Saccharomyces cerevisiae (strain ATCC 204508 / S288c) (Baker's yeast).